The chain runs to 83 residues: Small ribosomal subunit protein uS17 (83 aa).

Belongs to the universal ribosomal protein uS17 family. As to quaternary structure, part of the 30S ribosomal subunit.

Its function is as follows. One of the primary rRNA binding proteins, it binds specifically to the 5'-end of 16S ribosomal RNA. This is Small ribosomal subunit protein uS17 from Gloeobacter violaceus (strain ATCC 29082 / PCC 7421).